The primary structure comprises 617 residues: UvrABC system protein C (617 aa).

The 79-residue stretch at 22–100 folds into the GIY-YIG domain; sequence KLPGVYRFFD…IKALSPKYNI (79 aa). In terms of domain architecture, UVR spans 209 to 244; sequence DELTRTLQHKMQTAAANLQFEEAARYRDQIQALGIM.

This sequence belongs to the UvrC family. As to quaternary structure, interacts with UvrB in an incision complex.

The protein resides in the cytoplasm. Functionally, the UvrABC repair system catalyzes the recognition and processing of DNA lesions. UvrC both incises the 5' and 3' sides of the lesion. The N-terminal half is responsible for the 3' incision and the C-terminal half is responsible for the 5' incision. This chain is UvrABC system protein C, found in Neisseria meningitidis serogroup A / serotype 4A (strain DSM 15465 / Z2491).